A 282-amino-acid polypeptide reads, in one-letter code: Phosphate import ATP-binding protein PstB (282 aa).

The tract at residues 1 to 33 (MNMAETQLNPIARPTAPAGFDPAQSGQSQAPSR) is disordered. The 242-residue stretch at 36–277 (IEINDLNFFY…PVRKETEDYI (242 aa)) folds into the ABC transporter domain. 68–75 (GPSGCGKS) contacts ATP.

Belongs to the ABC transporter superfamily. Phosphate importer (TC 3.A.1.7) family. In terms of assembly, the complex is composed of two ATP-binding proteins (PstB), two transmembrane proteins (PstC and PstA) and a solute-binding protein (PstS).

Its subcellular location is the cell inner membrane. The catalysed reaction is phosphate(out) + ATP + H2O = ADP + 2 phosphate(in) + H(+). In terms of biological role, part of the ABC transporter complex PstSACB involved in phosphate import. Responsible for energy coupling to the transport system. In Paraburkholderia xenovorans (strain LB400), this protein is Phosphate import ATP-binding protein PstB.